Here is a 2531-residue protein sequence, read N- to C-terminus: Mediator of RNA polymerase II transcription subunit 12 (2531 aa).

4 disordered regions span residues 1–41 (MLSM…VKHG), 204–283 (QNHD…GSVM), 584–604 (VSRRREEDQVEPRPPYEPKQD), and 742–762 (TTATKTSPPPPAPPPTTTHGF). Residues 210-247 (SSNGTTSGSLTAAGNGPASNGSTGTSSINSVTGSSAST) are compositionally biased toward low complexity. The span at 586–604 (RRREEDQVEPRPPYEPKQD) shows a compositional bias: basic and acidic residues. T745 carries the post-translational modification Phosphothreonine. S748 and S781 each carry phosphoserine. Over residues 748 to 757 (SPPPPAPPPT) the composition is skewed to pro residues. A compositionally biased stretch (basic and acidic residues) spans 796 to 805 (EKGQQHEAPD). The tract at residues 796–824 (EKGQQHEAPDSPKIGPPGDGETNPGGSIS) is disordered. A phosphoserine mark is found at S806 and S1356. T1360 is modified (phosphothreonine). Polar residues-rich tracts occupy residues 1585–1595 (VSKSDCNSSGS) and 1901–1910 (TPSSVDQSPS). Disordered stretches follow at residues 1585–1608 (VSKSDCNSSGSGDEREKSNSCHSS), 1898–2092 (KADT…NQYA), 2114–2218 (QALS…GMAP), and 2469–2508 (MGGGAGGGMGAGPQQGGGAVGGGAGGGMVPQQQSMNQQQT). Over residues 1919-1933 (GRGKGTTTRKRKPKN) the composition is skewed to basic residues. 2 stretches are compositionally biased toward low complexity: residues 1938 to 2038 (PVVN…QQLN) and 2045 to 2055 (QPNPQMNFMQQ). The span at 2056–2066 (GPGGGGAGPQG) shows a compositional bias: gly residues. Composition is skewed to low complexity over residues 2067–2080 (MPGQQQQWHNAPQQ), 2121–2132 (RQRQPFQQQAQQ), and 2139–2205 (NPMQ…QQQQ). A compositionally biased stretch (gly residues) spans 2469–2496 (MGGGAGGGMGAGPQQGGGAVGGGAGGGM). Positions 2497-2507 (VPQQQSMNQQQ) are enriched in low complexity.

The protein belongs to the Mediator complex subunit 12 family. In terms of assembly, component of the Cdk8 module of the Mediator complex, composed of CycC, Cdk8, kto and skd.

Its subcellular location is the nucleus. Functionally, component of the Mediator complex, a coactivator involved in regulated gene transcription of nearly all RNA polymerase II-dependent genes. Mediator functions as a bridge to convey information from gene-specific regulatory proteins to the basal RNA polymerase II transcription machinery. Mediator is recruited to promoters by direct interactions with regulatory proteins and serves as a scaffold for the assembly of a functional preinitiation complex with RNA polymerase II and the general transcription factors. Required for leg and eye development and macrochaete specification or differentiation. This is Mediator of RNA polymerase II transcription subunit 12 (kto) from Drosophila melanogaster (Fruit fly).